Here is a 185-residue protein sequence, read N- to C-terminus: Meiotic recombination protein REC104 (185 aa).

Positions 146–168 are disordered; that stretch reads ANETRPLSSSSTPQILQSDYSVV.

Potential transcriptional regulator that is required to activate expression of a number of early meiotic genes including HOP1. This Saccharomyces pastorianus (Lager yeast) protein is Meiotic recombination protein REC104 (REC104).